A 282-amino-acid chain; its full sequence is Centromere protein P (282 aa).

Positions 1–80 (MEQKYEEDIQ…KDLRRQTEIN (80 aa)) form a coiled coil.

This sequence belongs to the CENP-P/CTF19 family.

Its subcellular location is the nucleus. The protein resides in the chromosome. It localises to the centromere. In terms of biological role, probable component of a centromeric complex involved in assembly of kinetochore proteins, mitotic progression and chromosome segregation. The sequence is that of Centromere protein P (cenpp) from Danio rerio (Zebrafish).